A 413-amino-acid polypeptide reads, in one-letter code: DNA primase DnaG (413 aa).

Residues 168–246 (PNLIIVEGRA…KIDYVARAPV (79 aa)) form the Toprim domain. Residues glutamate 174, aspartate 219, and aspartate 221 each coordinate Mg(2+).

The protein belongs to the archaeal DnaG primase family. Forms a ternary complex with MCM helicase and DNA. Component of the archaeal exosome complex. Requires Mg(2+) as cofactor.

The catalysed reaction is ssDNA + n NTP = ssDNA/pppN(pN)n-1 hybrid + (n-1) diphosphate.. Its function is as follows. RNA polymerase that catalyzes the synthesis of short RNA molecules used as primers for DNA polymerase during DNA replication. Also part of the exosome, which is a complex involved in RNA degradation. Acts as a poly(A)-binding protein that enhances the interaction between heteromeric, adenine-rich transcripts and the exosome. The polypeptide is DNA primase DnaG (Metallosphaera sedula (strain ATCC 51363 / DSM 5348 / JCM 9185 / NBRC 15509 / TH2)).